Reading from the N-terminus, the 341-residue chain is Probable long-chain-alcohol O-fatty-acyltransferase 1 (341 aa).

Transmembrane regions (helical) follow at residues 7–27, 36–56, 58–78, 120–140, 149–169, 233–253, 261–281, and 293–313; these read NLIEVWISALISLSYCYYISS, LLSILPVCILFLVLPLFLSCV, FCAISVLFLSWLANFKLLLFA, PMPKWVLAVKILVLGVLLHVY, FVVLALYCLHIYLEVELVLVF, MFAGVMASFFVSGLMHELLYF, TWEVTCFFVLHGAATATEIAV, and AVSGLVVLTFVSVTGVWLFLA.

Belongs to the wax synthase family.

The protein localises to the membrane. The enzyme catalyses a long chain fatty alcohol + a fatty acyl-CoA = a wax ester + CoA. Functionally, catalyzes the final step in the synthesis of long-chain linear esters (waxes). This chain is Probable long-chain-alcohol O-fatty-acyltransferase 1 (AT1), found in Arabidopsis thaliana (Mouse-ear cress).